A 406-amino-acid chain; its full sequence is Phosphorylase b kinase gamma catalytic chain, liver/testis isoform (406 aa).

The Protein kinase domain maps to 24–291 (YDPKDVIGRG…AEQALQHPFF (268 aa)). Residues 30-38 (IGRGVSSVV) and Lys-53 each bind ATP. Asp-153 acts as the Proton acceptor in catalysis. Residues 306–330 (QRFRVAVWTVLAAGRVALSTHRVRP) are calmodulin-binding (domain-N). Ser-345 is subject to Phosphoserine. A calmodulin-binding (domain-C) region spans residues 346–370 (VRHLIDNCAFRLYGHWVKKGEQQNR).

This sequence belongs to the protein kinase superfamily. CAMK Ser/Thr protein kinase family. In terms of assembly, hexadecamer of 4 heterotetramers, each composed of alpha, beta, gamma, and delta subunits. Alpha (PHKA1 or PHKA2) and beta (PHKB) are regulatory subunits, gamma (PHKG1 or PHKG2) is the catalytic subunit, and delta is calmodulin.

It catalyses the reaction 2 ATP + phosphorylase b = 2 ADP + phosphorylase a.. In terms of biological role, catalytic subunit of the phosphorylase b kinase (PHK), which mediates the neural and hormonal regulation of glycogen breakdown (glycogenolysis) by phosphorylating and thereby activating glycogen phosphorylase. May regulate glycogeneolysis in the testis. In vitro, phosphorylates PYGM. This is Phosphorylase b kinase gamma catalytic chain, liver/testis isoform (PHKG2) from Homo sapiens (Human).